The chain runs to 94 residues: Serine protease inhibitor Kazal-type 13 (94 aa).

Residues 1 to 23 (MAAFPHKIIFFLVCSTLTHVAFS) form the signal peptide. The Kazal-like domain occupies 33 to 94 (RWPKPRCKMY…IKFEKYGKCD (62 aa)). Disulfide bonds link Cys39-Cys75, Cys53-Cys72, and Cys61-Cys93. N-linked (GlcNAc...) asparagine glycosylation occurs at Asn55.

The protein localises to the secreted. In terms of biological role, may be a serine protease inhibitor. Essential for sperm maturation and fertility. Inhibits sperm acrosome reaction, protecting sperm from premature reaction. The sequence is that of Serine protease inhibitor Kazal-type 13 (SPINK13) from Homo sapiens (Human).